A 785-amino-acid chain; its full sequence is Cadherin-7 (785 aa).

The N-terminal stretch at 1 to 27 is a signal peptide; the sequence is MKLGKVELCHFLQLIALFLCFSGMSQA. Positions 28-47 are excised as a propeptide; the sequence is ELPRSRSKPYFQSGRSRTKR. The Extracellular segment spans residues 28-607; the sequence is ELPRSRSKPY…AYVLPAGLST (580 aa). Cadherin domains are found at residues 49 to 153, 154 to 262, 263 to 377, 378 to 482, and 482 to 599; these read WVWN…EPKF, LDGP…PPRF, PRRS…PPVF, SSPL…APEF, and FAMD…AEAY. 2 N-linked (GlcNAc...) asparagine glycosylation sites follow: Asn-449 and Asn-530. A helical transmembrane segment spans residues 608–628; that stretch reads GALIAILACVLTLLVLILLIV. The Cytoplasmic portion of the chain corresponds to 629–785; the sequence is TMRRRKKEPL…YGNGQESLYS (157 aa).

The protein resides in the cell membrane. Cadherins are calcium-dependent cell adhesion proteins. They preferentially interact with themselves in a homophilic manner in connecting cells; cadherins may thus contribute to the sorting of heterogeneous cell types. The polypeptide is Cadherin-7 (Cdh7) (Mus musculus (Mouse)).